The chain runs to 297 residues: PsbP domain-containing protein 5, chloroplastic (297 aa).

This sequence belongs to the PsbP family.

The protein localises to the plastid. Its subcellular location is the chloroplast thylakoid lumen. In terms of biological role, involved in strigolactone biosynthesis. The chain is PsbP domain-containing protein 5, chloroplastic (PPD5) from Arabidopsis thaliana (Mouse-ear cress).